Here is a 457-residue protein sequence, read N- to C-terminus: Heme sensor protein HssS (457 aa).

A run of 2 helical transmembrane segments spans residues 9-29 (IAIY…VLTN) and 164-184 (TFLA…VIAS). Positions 186–238 (YSIIRPVKKLKLATERLIDGDFETPIKQTRKDEIGTLQYHFNKMRESLGQVDQ) constitute an HAMP domain. Residues 246–456 (NVSHEIKTPL…TFTITLPNNS (211 aa)) enclose the Histidine kinase domain. His-249 carries the phosphohistidine; by autocatalysis modification.

In terms of processing, autophosphorylated.

Its subcellular location is the cell membrane. It catalyses the reaction ATP + protein L-histidine = ADP + protein N-phospho-L-histidine.. In terms of biological role, member of the two-component regulatory system HssS/HssR involved in intracellular heme homeostasis and tempering of staphylococcal virulence. HssS functions as a heme sensor histidine kinase which is autophosphorylated at a histidine residue and transfers its phosphate group to an aspartate residue of HssR. HssR/HssS activates the expression of hrtAB, an efflux pump, in response to extracellular heme, hemin, hemoglobin or blood. The protein is Heme sensor protein HssS (hssS) of Staphylococcus aureus (strain Mu3 / ATCC 700698).